A 351-amino-acid polypeptide reads, in one-letter code: Thiamine-phosphate synthase (351 aa).

The unknown stretch occupies residues 1–127; it reads MQNLAPASEG…SETAKALRYR (127 aa). The interval 64–84 is disordered; that stretch reads RAARQTDQDPGTALSHPQERD. A thiamine-phosphate synthase region spans residues 128–351; that stretch reads VYILEQALTL…LRRLSQGEPS (224 aa). 4-amino-2-methyl-5-(diphosphooxymethyl)pyrimidine-binding positions include 178 to 182 and Asn210; that span reads QYRDK. Mg(2+) is bound by residues Asp211 and Asp230. Ser249 contributes to the 4-amino-2-methyl-5-(diphosphooxymethyl)pyrimidine binding site. Position 275–277 (275–277) interacts with 2-[(2R,5Z)-2-carboxy-4-methylthiazol-5(2H)-ylidene]ethyl phosphate; the sequence is TPT. Lys278 is a binding site for 4-amino-2-methyl-5-(diphosphooxymethyl)pyrimidine. Gly305 is a 2-[(2R,5Z)-2-carboxy-4-methylthiazol-5(2H)-ylidene]ethyl phosphate binding site.

It belongs to the thiamine-phosphate synthase family. It depends on Mg(2+) as a cofactor.

It catalyses the reaction 2-[(2R,5Z)-2-carboxy-4-methylthiazol-5(2H)-ylidene]ethyl phosphate + 4-amino-2-methyl-5-(diphosphooxymethyl)pyrimidine + 2 H(+) = thiamine phosphate + CO2 + diphosphate. It carries out the reaction 2-(2-carboxy-4-methylthiazol-5-yl)ethyl phosphate + 4-amino-2-methyl-5-(diphosphooxymethyl)pyrimidine + 2 H(+) = thiamine phosphate + CO2 + diphosphate. The enzyme catalyses 4-methyl-5-(2-phosphooxyethyl)-thiazole + 4-amino-2-methyl-5-(diphosphooxymethyl)pyrimidine + H(+) = thiamine phosphate + diphosphate. The protein operates within cofactor biosynthesis; thiamine diphosphate biosynthesis; thiamine phosphate from 4-amino-2-methyl-5-diphosphomethylpyrimidine and 4-methyl-5-(2-phosphoethyl)-thiazole: step 1/1. Functionally, condenses 4-methyl-5-(beta-hydroxyethyl)thiazole monophosphate (THZ-P) and 2-methyl-4-amino-5-hydroxymethyl pyrimidine pyrophosphate (HMP-PP) to form thiamine monophosphate (TMP). This is Thiamine-phosphate synthase from Thermosynechococcus vestitus (strain NIES-2133 / IAM M-273 / BP-1).